A 161-amino-acid chain; its full sequence is Large ribosomal subunit protein uL29c (161 aa).

The transit peptide at 1-61 (MATMSLAAAS…ERRAAAMVAM (61 aa)) directs the protein to the chloroplast.

This sequence belongs to the universal ribosomal protein uL29 family. As to quaternary structure, part of the 50S ribosomal subunit.

Its subcellular location is the plastid. The protein localises to the chloroplast. In Zea mays (Maize), this protein is Large ribosomal subunit protein uL29c (RPL29).